The sequence spans 295 residues: Large ribosomal subunit protein uL29m (295 aa).

This sequence belongs to the universal ribosomal protein uL29 family. As to quaternary structure, component of the mitochondrial large ribosomal subunit. Mature mitochondrial ribosomes consist of a small (37S) and a large (54S) subunit. The 37S subunit contains at least 33 different proteins and 1 molecule of RNA (15S). The 54S subunit contains at least 45 different proteins and 1 molecule of RNA (21S).

The protein localises to the mitochondrion. This is Large ribosomal subunit protein uL29m (MRPL4) from Meyerozyma guilliermondii (strain ATCC 6260 / CBS 566 / DSM 6381 / JCM 1539 / NBRC 10279 / NRRL Y-324) (Yeast).